Reading from the N-terminus, the 74-residue chain is Protein SlyX homolog (74 aa).

It belongs to the SlyX family.

The polypeptide is Protein SlyX homolog (Neisseria meningitidis serogroup C / serotype 2a (strain ATCC 700532 / DSM 15464 / FAM18)).